We begin with the raw amino-acid sequence, 82 residues long: uncharacterized protein (82 aa).

The next 3 helical transmembrane spans lie at 4-26 (LDIA…TCIC), 31-48 (LMPM…FTIF), and 52-74 (FLGW…LIVV).

The protein resides in the cell membrane. This is an uncharacterized protein from Bacillus subtilis (strain 168).